Consider the following 176-residue polypeptide: Sperm-egg fusion protein TMEM95 (176 aa).

Positions 1–16 (MWVLALGGAFLAVAKA) are cleaved as a signal peptide. Disulfide bonds link cysteine 17–cysteine 119, cysteine 20–cysteine 122, cysteine 106–cysteine 129, and cysteine 110–cysteine 135. Residues 17-146 (CIFCRLQDHA…PDSHDLWDAR (130 aa)) are Extracellular-facing. N-linked (GlcNAc...) asparagine glycans are attached at residues asparagine 36 and asparagine 118. Residues 147-167 (ILLLCIFGIVLLSGVVSLQVE) traverse the membrane as a helical segment. Over 168–176 (YLNLQAKDL) the chain is Cytoplasmic.

Belongs to the TMEM95 family. Does not interact with sperm-egg fusion proteins IZUMO1 or IZUMO1R/JUNO. Post-translationally, N-glycosylated. In terms of tissue distribution, expressed exclusively in testis.

The protein resides in the cytoplasmic vesicle. The protein localises to the secretory vesicle. It localises to the acrosome membrane. In terms of biological role, sperm protein required for fusion of sperm with the egg membrane during fertilization. The protein is Sperm-egg fusion protein TMEM95 of Mus musculus (Mouse).